The sequence spans 225 residues: PKHD-type hydroxylase YbiX (225 aa).

Residues 78–177 enclose the Fe2OG dioxygenase domain; it reads TLSTPLFNRY…RVASFMWIQS (100 aa). Fe cation-binding residues include H96, D98, and H158. Residue R168 participates in 2-oxoglutarate binding.

The cofactor is Fe(2+). It depends on L-ascorbate as a cofactor.

In Escherichia coli O17:K52:H18 (strain UMN026 / ExPEC), this protein is PKHD-type hydroxylase YbiX.